The sequence spans 476 residues: Nyctalopin (476 aa).

The N-terminal stretch at 1 to 18 (MLILLLHAVVFSLPYTRA) is a signal peptide. In terms of domain architecture, LRRNT spans 19 to 57 (TEACLRACPAACTCSHVERGCSVRCDRAGLQRVPQEFPC). LRR repeat units lie at residues 58-79 (EAAS…AFGT), 82-103 (SLRR…AFKG), 106-128 (RLAE…TFAA), 131-154 (RLRR…AELP), 155-177 (ALRE…RGLA), 178-199 (NLTH…SLLG), 202-223 (RLRS…AFGD), 226-247 (ALED…AFRG), 250-271 (RLRT…WFSD), 274-295 (ELEL…AFQN), and 298-319 (GLLA…AFQP). The N-linked (GlcNAc...) asparagine glycan is linked to Asn-92. A glycan (N-linked (GlcNAc...) asparagine) is linked at Asn-178. The N-linked (GlcNAc...) asparagine glycan is linked to Asn-295. The 53-residue stretch at 331 to 383 (NPWRCDCQLEWLRDWMEGSGRVADVACASPGSVAGQDLSQVVFERSSDGLCVD) folds into the LRRCT domain. 4 N-linked (GlcNAc...) asparagine glycosylation sites follow: Asn-388, Asn-427, Asn-434, and Asn-438.

This sequence belongs to the small leucine-rich proteoglycan (SLRP) family. SLRP class IV subfamily. Expressed abundantly in retina with lower levels in brain, lung, spleen and testis. Not detected in kidney, heart or liver. In the retina, highest expression found in the inner nuclear layer and ganglion cell layer.

It localises to the secreted. It is found in the extracellular space. Its subcellular location is the extracellular matrix. This is Nyctalopin (Nyx) from Mus musculus (Mouse).